A 444-amino-acid polypeptide reads, in one-letter code: tRNA-2-methylthio-N(6)-dimethylallyladenosine synthase (444 aa).

The MTTase N-terminal domain occupies 8-122 (KTFYIETFGC…LAEMLVQIES (115 aa)). Cysteine 17, cysteine 53, cysteine 85, cysteine 160, cysteine 164, and cysteine 167 together coordinate [4Fe-4S] cluster. In terms of domain architecture, Radical SAM core spans 146 to 376 (RGNAHRGYIT…MEHQREIQRA (231 aa)). The TRAM domain maps to 379-444 (RKHIGETIEV…PNSLVGELVG (66 aa)).

The protein belongs to the methylthiotransferase family. MiaB subfamily. In terms of assembly, monomer. It depends on [4Fe-4S] cluster as a cofactor.

Its subcellular location is the cytoplasm. The enzyme catalyses N(6)-dimethylallyladenosine(37) in tRNA + (sulfur carrier)-SH + AH2 + 2 S-adenosyl-L-methionine = 2-methylsulfanyl-N(6)-dimethylallyladenosine(37) in tRNA + (sulfur carrier)-H + 5'-deoxyadenosine + L-methionine + A + S-adenosyl-L-homocysteine + 2 H(+). In terms of biological role, catalyzes the methylthiolation of N6-(dimethylallyl)adenosine (i(6)A), leading to the formation of 2-methylthio-N6-(dimethylallyl)adenosine (ms(2)i(6)A) at position 37 in tRNAs that read codons beginning with uridine. The chain is tRNA-2-methylthio-N(6)-dimethylallyladenosine synthase from Koribacter versatilis (strain Ellin345).